We begin with the raw amino-acid sequence, 276 residues long: UPF0276 protein AM1_3026 (276 aa).

This sequence belongs to the UPF0276 family.

The chain is UPF0276 protein AM1_3026 from Acaryochloris marina (strain MBIC 11017).